The chain runs to 149 residues: UPF0260 protein Avin_32930 (149 aa).

This sequence belongs to the UPF0260 family.

The protein is UPF0260 protein Avin_32930 of Azotobacter vinelandii (strain DJ / ATCC BAA-1303).